The sequence spans 122 residues: Photosystem II extrinsic protein U (122 aa).

Residues methionine 1 to alanine 26 form the signal peptide.

This sequence belongs to the PsbU family. In terms of assembly, PSII is composed of 1 copy each of membrane proteins PsbA, PsbB, PsbC, PsbD, PsbE, PsbF, PsbH, PsbI, PsbJ, PsbK, PsbL, PsbM, PsbT, PsbX, PsbY, PsbZ, Psb30/Ycf12, peripheral proteins PsbO, CyanoQ (PsbQ), PsbU, PsbV and a large number of cofactors. It forms dimeric complexes.

The protein localises to the cellular thylakoid membrane. One of the extrinsic, lumenal subunits of photosystem II (PSII). PSII is a light-driven water plastoquinone oxidoreductase, using light energy to abstract electrons from H(2)O, generating a proton gradient subsequently used for ATP formation. The extrinsic proteins stabilize the structure of photosystem II oxygen-evolving complex (OEC), the ion environment of oxygen evolution and protect the OEC against heat-induced inactivation. The protein is Photosystem II extrinsic protein U of Crocosphaera subtropica (strain ATCC 51142 / BH68) (Cyanothece sp. (strain ATCC 51142)).